The following is a 597-amino-acid chain: Elongation factor 4 (597 aa).

The tr-type G domain occupies 2 to 184 (DHIRNFSIIA…ALIAKVPPPK (183 aa)). GTP-binding positions include 14 to 19 (DHGKST) and 131 to 134 (NKID).

The protein belongs to the TRAFAC class translation factor GTPase superfamily. Classic translation factor GTPase family. LepA subfamily.

Its subcellular location is the cell inner membrane. It catalyses the reaction GTP + H2O = GDP + phosphate + H(+). Its function is as follows. Required for accurate and efficient protein synthesis under certain stress conditions. May act as a fidelity factor of the translation reaction, by catalyzing a one-codon backward translocation of tRNAs on improperly translocated ribosomes. Back-translocation proceeds from a post-translocation (POST) complex to a pre-translocation (PRE) complex, thus giving elongation factor G a second chance to translocate the tRNAs correctly. Binds to ribosomes in a GTP-dependent manner. In Cupriavidus pinatubonensis (strain JMP 134 / LMG 1197) (Cupriavidus necator (strain JMP 134)), this protein is Elongation factor 4.